Consider the following 287-residue polypeptide: Large ribosomal subunit protein uL2 (287 aa).

Disordered stretches follow at residues 1 to 30 and 211 to 287; these read MGIRNYRPYTPGTRQKSVSDFSEITHDQPE and NRWK…GRQS. Residues 12-22 show a composition bias toward polar residues; it reads GTRQKSVSDFS. Composition is skewed to basic residues over residues 211-220 and 258-287; these read NRWKGRRPKV and KTRKKKKLSNALIVRRRRKSSKRGRGGRQS.

This sequence belongs to the universal ribosomal protein uL2 family. In terms of assembly, part of the 50S ribosomal subunit. Forms a bridge to the 30S subunit in the 70S ribosome.

One of the primary rRNA binding proteins. Required for association of the 30S and 50S subunits to form the 70S ribosome, for tRNA binding and peptide bond formation. It has been suggested to have peptidyltransferase activity; this is somewhat controversial. Makes several contacts with the 16S rRNA in the 70S ribosome. This Cyanothece sp. (strain PCC 7425 / ATCC 29141) protein is Large ribosomal subunit protein uL2.